The chain runs to 358 residues: uncharacterized protein (358 aa).

This is an uncharacterized protein from Klebsiella pneumoniae.